The primary structure comprises 218 residues: Twisted gastrulation protein homolog 1-B (218 aa).

The first 25 residues, 1–25 (MKPSFLHIPAAALLLCSLWILPIHC), serve as a signal peptide directing secretion. N52, N81, and N147 each carry an N-linked (GlcNAc...) asparagine glycan.

The protein belongs to the twisted gastrulation protein family. In terms of assembly, binds directly to bmp2, bmp4 and bmp7 and can form a ternary complex with bmps and chordin, thus preventing the binding of bmps to their cell surface receptors.

The protein resides in the secreted. Involved in dorsal-ventral patterning, permitting peak BMP signaling by antagonizing the residual anti-BMP activity of the cleavage products of chrd. Functions to promote the formation of ventral mesoderm by increasing the activity of bmp7 and other BMPS. Seems to antagonize BMP signaling by forming ternary complexes with chrd and BMPs, thereby preventing BMPs from binding to their receptors. In addition to the anti-BMP function, also has pro-BMP activity, partly mediated by cleavage and degradation of chrd, which releases BMPs from ternary complexes. May be an important modulator of BMP-regulated cartilage development and chondrocyte differentiation. This Xenopus laevis (African clawed frog) protein is Twisted gastrulation protein homolog 1-B (twsg1-b).